The following is a 250-amino-acid chain: 3-deoxy-manno-octulosonate cytidylyltransferase (250 aa).

It belongs to the KdsB family.

Its subcellular location is the cytoplasm. The enzyme catalyses 3-deoxy-alpha-D-manno-oct-2-ulosonate + CTP = CMP-3-deoxy-beta-D-manno-octulosonate + diphosphate. It functions in the pathway nucleotide-sugar biosynthesis; CMP-3-deoxy-D-manno-octulosonate biosynthesis; CMP-3-deoxy-D-manno-octulosonate from 3-deoxy-D-manno-octulosonate and CTP: step 1/1. Its pathway is bacterial outer membrane biogenesis; lipopolysaccharide biosynthesis. Functionally, activates KDO (a required 8-carbon sugar) for incorporation into bacterial lipopolysaccharide in Gram-negative bacteria. In Xanthomonas campestris pv. campestris (strain 8004), this protein is 3-deoxy-manno-octulosonate cytidylyltransferase.